We begin with the raw amino-acid sequence, 506 residues long: Chromosomal replication initiator protein DnaA (506 aa).

Residues Met1–Arg87 form a domain I, interacts with DnaA modulators region. Positions Arg87–Ser169 are domain II. The tract at residues Asp135 to Ala154 is disordered. A compositionally biased stretch (low complexity) spans Ala139 to Pro148. The interval Tyr170 to Ser386 is domain III, AAA+ region. Residues Gly214, Gly216, Lys217, and Thr218 each contribute to the ATP site. The interval His387–Thr506 is domain IV, binds dsDNA.

Belongs to the DnaA family. Oligomerizes as a right-handed, spiral filament on DNA at oriC.

It localises to the cytoplasm. Plays an essential role in the initiation and regulation of chromosomal replication. ATP-DnaA binds to the origin of replication (oriC) to initiate formation of the DNA replication initiation complex once per cell cycle. Binds the DnaA box (a 9 base pair repeat at the origin) and separates the double-stranded (ds)DNA. Forms a right-handed helical filament on oriC DNA; dsDNA binds to the exterior of the filament while single-stranded (ss)DNA is stabiized in the filament's interior. The ATP-DnaA-oriC complex binds and stabilizes one strand of the AT-rich DNA unwinding element (DUE), permitting loading of DNA polymerase. After initiation quickly degrades to an ADP-DnaA complex that is not apt for DNA replication. Binds acidic phospholipids. In terms of biological role, non-cooperatively binds DnaA boxes in the minimal plasmid RK2 replication origin (oriV). In vitro in the presence of plasmid RK2-derived TrfA and E.coli protein HU, forms an open complex at oriV. This complex was not however competent for formation of a pre-priming complex with E.coli DnaB and DnaC. Broad host range plasmid RK2 requires not only DnaA for replication but also TrfA and host factors. The chain is Chromosomal replication initiator protein DnaA from Pseudomonas putida (strain ATCC 47054 / DSM 6125 / CFBP 8728 / NCIMB 11950 / KT2440).